Consider the following 511-residue polypeptide: Putative CBL-interacting protein kinase 13 (511 aa).

Positions 25–279 (FEVGKLLGQG…AEGIMENEWF (255 aa)) constitute a Protein kinase domain. ATP is bound by residues 31 to 39 (LGQGNFAKV) and K54. D147 acts as the Proton acceptor in catalysis. Positions 165–194 (DFGLSAVADGMRRDGLFHTFCGTPAYVAPE) are activation loop. Residues 307–340 (VDAPTSPPDTPRTVDSGDVGAAPTRPRKAGSLTS) are disordered. The region spanning 321-383 (DSGDVGAAPT…PGFDLSGLFD (63 aa)) is the NAF domain. The interval 400–429 (KHTARFVSAAPVEVIVATLEAAAAAAGMAV) is PPI.

Belongs to the protein kinase superfamily. CAMK Ser/Thr protein kinase family. SNF1 subfamily. It depends on Mn(2+) as a cofactor.

It carries out the reaction L-seryl-[protein] + ATP = O-phospho-L-seryl-[protein] + ADP + H(+). It catalyses the reaction L-threonyl-[protein] + ATP = O-phospho-L-threonyl-[protein] + ADP + H(+). Its function is as follows. CIPK serine-threonine protein kinases interact with CBL proteins. Binding of a CBL protein to the regulatory NAF domain of CIPK protein lead to the activation of the kinase in a calcium-dependent manner. The polypeptide is Putative CBL-interacting protein kinase 13 (CIPK13) (Oryza sativa subsp. japonica (Rice)).